Here is a 168-residue protein sequence, read N- to C-terminus: Pathogenesis-related protein 1A (168 aa).

Positions 1–30 are cleaved as a signal peptide; the sequence is MGFVLFSQLPSFLLVSTLLLFLVISHSCRA. The SCP domain maps to 38–156; sequence LDAHNTARAD…NGGYVVSCNY (119 aa).

The protein belongs to the CRISP family. Three disulfide bonds are present.

Its subcellular location is the vacuole. Functionally, probably involved in the defense reaction of plants against pathogens. The polypeptide is Pathogenesis-related protein 1A (Nicotiana tabacum (Common tobacco)).